We begin with the raw amino-acid sequence, 485 residues long: Glycogen synthase (485 aa).

An ADP-alpha-D-glucose-binding site is contributed by K20.

The protein belongs to the glycosyltransferase 1 family. Bacterial/plant glycogen synthase subfamily.

The catalysed reaction is [(1-&gt;4)-alpha-D-glucosyl](n) + ADP-alpha-D-glucose = [(1-&gt;4)-alpha-D-glucosyl](n+1) + ADP + H(+). It participates in glycan biosynthesis; glycogen biosynthesis. Functionally, synthesizes alpha-1,4-glucan chains using ADP-glucose. The protein is Glycogen synthase of Vibrio vulnificus (strain CMCP6).